The following is a 466-amino-acid chain: Glutamate--tRNA ligase (466 aa).

Residues Pro-10–Gly-20 carry the 'HIGH' region motif. The Zn(2+) site is built by Cys-99, Cys-101, Cys-126, and Asp-128. The 'KMSKS' region motif lies at Lys-239–Arg-243. Position 242 (Lys-242) interacts with ATP.

This sequence belongs to the class-I aminoacyl-tRNA synthetase family. Glutamate--tRNA ligase type 1 subfamily. In terms of assembly, monomer. The cofactor is Zn(2+).

It localises to the cytoplasm. The catalysed reaction is tRNA(Glu) + L-glutamate + ATP = L-glutamyl-tRNA(Glu) + AMP + diphosphate. In terms of biological role, catalyzes the attachment of glutamate to tRNA(Glu) in a two-step reaction: glutamate is first activated by ATP to form Glu-AMP and then transferred to the acceptor end of tRNA(Glu). The protein is Glutamate--tRNA ligase of Pelagibacter ubique (strain HTCC1062).